A 1380-amino-acid polypeptide reads, in one-letter code: Receptor-type adenylate cyclase A (1380 aa).

Residues 1 to 34 (MAMQIRPSLGGCLRHGGAGDHAARRLSRLRAAKV) lie on the Cytoplasmic side of the membrane. The chain crosses the membrane as a helical span at residues 35–55 (FVPTAVVCVLLCCAPWVMAEI). Over 56–891 (TNDAEREPVY…SHALTPAQRN (836 aa)) the chain is Extracellular. Residues Asn-422, Asn-478, Asn-497, and Asn-567 are each glycosylated (N-linked (GlcNAc...) asparagine). Residues 892 to 912 (GLIAGCVVGAVVLIATCTLLL) form a helical membrane-spanning segment. Residues 913–1380 (YCCMDNRNND…NPHYARHAFE (468 aa)) are Cytoplasmic-facing. The Guanylate cyclase domain occupies 933-1087 (TLLFTDIESS…DTSNMAARTE (155 aa)). Mg(2+) contacts are provided by Asp-938 and Asp-981. Positions 1270–1298 (LAREGDSAAGGVRPRLPGSPVTSLPAGGS) are disordered.

The protein belongs to the adenylyl cyclase class-3 family. Mg(2+) is required as a cofactor.

It localises to the membrane. The catalysed reaction is ATP = 3',5'-cyclic AMP + diphosphate. Its function is as follows. Could act as a receptor for an unknown ligand. This chain is Receptor-type adenylate cyclase A (RAC-A), found in Leishmania donovani.